Here is a 512-residue protein sequence, read N- to C-terminus: Inosine-5'-monophosphate dehydrogenase (512 aa).

CBS domains follow at residues 110 to 169 and 173 to 231; these read FIMK…SAPV and MTRR…PNSS. Residues 268–270 and 318–320 each bind NAD(+); these read DSS and GMG. Residues Gly320 and Gly322 each coordinate K(+). Ser323 lines the IMP pocket. Cys325 is a binding site for K(+). Cys325 (thioimidate intermediate) is an active-site residue. IMP is bound by residues 358 to 360, 381 to 382, and 405 to 409; these read DGG, GS, and YRGMG. The active-site Proton acceptor is the Arg423. Gln435 contacts IMP. Glu494 and Gly495 together coordinate K(+). Residues 510 to 512 carry the Microbody targeting signal motif; that stretch reads SKL.

Belongs to the IMPDH/GMPR family. As to quaternary structure, homotetramer. K(+) serves as cofactor.

The protein resides in the glycosome. It carries out the reaction IMP + NAD(+) + H2O = XMP + NADH + H(+). It functions in the pathway purine metabolism; XMP biosynthesis via de novo pathway; XMP from IMP: step 1/1. Mycophenolic acid (MPA) is a non-competitive inhibitor that prevents formation of the closed enzyme conformation by binding to the same site as the amobile flap. In contrast, mizoribine monophosphate (MZP) is a competitive inhibitor that induces the closed conformation. MPA is a potent inhibitor of mammalian IMPDHs but a poor inhibitor of the bacterial enzymes. MZP is a more potent inhibitor of bacterial IMPDH. Catalyzes the conversion of inosine 5'-phosphate (IMP) to xanthosine 5'-phosphate (XMP), the first committed and rate-limiting step in the de novo synthesis of guanine nucleotides, and therefore plays an important role in the regulation of cell growth. The polypeptide is Inosine-5'-monophosphate dehydrogenase (Trypanosoma brucei brucei).